We begin with the raw amino-acid sequence, 305 residues long: N-acetylneuraminate lyase A (305 aa).

Positions 51 and 52 each coordinate aceneuramate. The active-site Proton donor is the tyrosine 143. Lysine 173 acts as the Schiff-base intermediate with substrate in catalysis. Positions 175, 197, 199, 200, and 216 each coordinate aceneuramate.

Belongs to the DapA family. NanA subfamily. Homotetramer.

Its subcellular location is the cytoplasm. The catalysed reaction is aceneuramate = aldehydo-N-acetyl-D-mannosamine + pyruvate. Its pathway is amino-sugar metabolism; N-acetylneuraminate degradation. Functionally, catalyzes the cleavage of N-acetylneuraminic acid (sialic acid) to form pyruvate and N-acetylmannosamine via a Schiff base intermediate. It prevents sialic acids from being recycled and returning to the cell surface. Involved in the N-glycolylneuraminic acid (Neu5Gc) degradation pathway. The protein is N-acetylneuraminate lyase A (npl-a) of Xenopus laevis (African clawed frog).